Here is a 156-residue protein sequence, read N- to C-terminus: Arginine repressor (156 aa).

It belongs to the ArgR family.

It is found in the cytoplasm. It participates in amino-acid biosynthesis; L-arginine biosynthesis [regulation]. Its function is as follows. Regulates arginine biosynthesis genes. This is Arginine repressor from Photorhabdus laumondii subsp. laumondii (strain DSM 15139 / CIP 105565 / TT01) (Photorhabdus luminescens subsp. laumondii).